A 181-amino-acid polypeptide reads, in one-letter code: MDSHQELSAGSPISYDFLDPDWCFKRYLTKDALHSIETGKGAAYFVPDGFTPILIPNSQSYLLDGNSAQLPRPQPISFTLDQCKVPGYILKSLRKDTTSTERTPRPPNAFILYRKEKHATLLKSNPSINNSQVSKLVGEMWRNESKEVRMRYFKMSEFYKAQHQKMYPGYKYQPRKNKVKR.

The segment at residues 103-171 (TPRPPNAFIL…QHQKMYPGYK (69 aa)) is a DNA-binding region (HMG box).

It localises to the nucleus. The protein resides in the cytoplasm. It is found in the cytoskeleton. Its subcellular location is the microtubule organizing center. The protein localises to the spindle pole body. In terms of biological role, mating type proteins are sequence specific DNA-binding proteins that act as master switches in yeast differentiation by controlling gene expression in a cell type-specific fashion. Positive regulator of MFM genes. The HMG box recognizes the DNA sequence 5'-AACAAAG-3'. Required for conjugation and efficient meiosis. The protein is Mating-type M-specific polypeptide Mc (mat3-Mc) of Schizosaccharomyces pombe (Fission yeast).